Consider the following 286-residue polypeptide: Acetyl-coenzyme A carboxylase carboxyl transferase subunit beta (286 aa).

A CoA carboxyltransferase N-terminal domain is found at 27–286; the sequence is LMTKCPKCKL…HSEETNHATI (260 aa). Cysteine 31, cysteine 34, cysteine 50, and cysteine 52 together coordinate Zn(2+). A C4-type zinc finger spans residues 31 to 52; sequence CPKCKLIQYTKQLEANLKVCVC.

It belongs to the AccD/PCCB family. Acetyl-CoA carboxylase is a heterohexamer composed of biotin carboxyl carrier protein (AccB), biotin carboxylase (AccC) and two subunits each of ACCase subunit alpha (AccA) and ACCase subunit beta (AccD). Zn(2+) serves as cofactor.

The protein resides in the cytoplasm. It carries out the reaction N(6)-carboxybiotinyl-L-lysyl-[protein] + acetyl-CoA = N(6)-biotinyl-L-lysyl-[protein] + malonyl-CoA. Its pathway is lipid metabolism; malonyl-CoA biosynthesis; malonyl-CoA from acetyl-CoA: step 1/1. In terms of biological role, component of the acetyl coenzyme A carboxylase (ACC) complex. Biotin carboxylase (BC) catalyzes the carboxylation of biotin on its carrier protein (BCCP) and then the CO(2) group is transferred by the transcarboxylase to acetyl-CoA to form malonyl-CoA. In Exiguobacterium sibiricum (strain DSM 17290 / CCUG 55495 / CIP 109462 / JCM 13490 / 255-15), this protein is Acetyl-coenzyme A carboxylase carboxyl transferase subunit beta.